We begin with the raw amino-acid sequence, 351 residues long: MAAAAGRSLLLLLSSRGGGGGGAGGCGALTAGCFPGLGVSRHRQQQHHRTVHQRIASWQNLGAVYCSTVVPSDDVTVVYQNGLPVISVRLPSRRERCQFTLKPISDSVGVFLRQLQEEDRGIDRVAIYSPDGVRVAASTGIDLLLLDDFKLVINDLTYHVRPPKRDLLSHENAATLNDVKTLVQQLYTTLCIEQHQLNKERELIERLEDLKEQLAPLEKVRIEISRKAEKRTTLVLWGGLAYMATQFGILARLTWWEYSWDIMEPVTYFITYGSAMAMYAYFVMTRQEYVYPEARDRQYLLFFHKGAKKSRFDLEKYNQLKDAIAQAEMDLKRLRDPLQVHLPLRQIGEKD.

The N-terminal 50 residues, Met1–Thr50, are a transit peptide targeting the mitochondrion. Residues Val51–Thr233 are Mitochondrial matrix-facing. Phosphoserine; by CaMK2 occurs at positions 57 and 92. The tract at residues Val75–Arg165 is N-terminal MCU domain. Cys97 is modified (S-glutathionyl cysteine). Residues Ile192 to Glu223 are a coiled coil. Residues Leu234–Trp255 traverse the membrane as a helical segment. Over Trp256–Ile262 the chain is Mitochondrial intermembrane. Positions Trp260 to Tyr268 match the Selectivity filter motif. A helical transmembrane segment spans residues Met263–Met284. Glu264 serves as a coordination point for Ca(2+). A juxtamembrane helix region spans residues Thr285 to Val290. Residues Thr285–Asp351 are Mitochondrial matrix-facing. A coiled-coil region spans residues Arg311–Gln339. The residue at position 332 (Lys332) is an N6-acetyllysine.

Belongs to the MCU (TC 1.A.77) family. In terms of assembly, homotetramer. Component of the uniplex complex, composed of MCU, EMRE/SMDT1, MICU1 and MICU2 (or MICU3) in a 4:4:1:1 stoichiometry. Interacts with CCDC109B/MCUB; this inhibits channel activity. Interacts with MCUR1. Interactions with MICU1 and MCUR1 are mutually exclusive. Interacts with SLC25A23. In terms of processing, phosphorylation by CaMK2 in heart leads to increased MCU current. The regulation of MCU by CaMK2 is however subject to discussion: another group was unable to reproduce these results. Phosphorylated on tyrosines by PTK2B/PYK2, promoting oligomerization. Post-translationally, glutathionylation at Cys-97 in response to reactive oxygen species (ROS) promotes MCU higher-order assembly, leading to constitutive activation of the MCU channel and mitochondrial calcium overload. Undergoes proteolytic degradation by SPG7.

The protein localises to the mitochondrion inner membrane. It carries out the reaction Ca(2+)(in) = Ca(2+)(out). With respect to regulation, MCU channel activity is regulated by the heterodimer composed of MICU1 and either MICU2 or MICU3, which act as calcium-sensors. At low calcium levels, MICU1 occludes the pore of the MCU channel, preventing mitochondrial calcium uptake. At higher calcium levels, calcium-binding to MICU1 and MICU2 (or MICU3) induces a conformational change that weakens MCU-MICU1 interactions and moves the MICU1-MICU2 heterodimer away from the pore, allowing calcium permeation through the channel. MCU channel activity is gated by EMRE/SMDT1 via the juxtamembrane helix loop. Inhibited by ruthenium red or its derivative Ru360. Channel-forming and calcium-conducting subunit of the mitochondrial inner membrane calcium uniporter complex (uniplex), which mediates calcium uptake into the mitochondrial matrix. MCU channel activity is regulated by the calcium-sensor subunits of the uniplex MICU1 and MICU2 (or MICU3). Mitochondrial calcium homeostasis plays key roles in cellular physiology and regulates ATP production, cytoplasmic calcium signals and activation of cell death pathways. Involved in buffering the amplitude of systolic calcium rises in cardiomyocytes. While dispensable for baseline homeostatic cardiac function, acts as a key regulator of short-term mitochondrial calcium loading underlying a 'fight-or-flight' response during acute stress: acts by mediating a rapid increase of mitochondrial calcium in pacemaker cells. Participates in mitochondrial permeability transition during ischemia-reperfusion injury. Mitochondrial calcium uptake in skeletal muscle cells is involved in muscle size in adults. Regulates synaptic vesicle endocytosis kinetics in central nerve terminal. Regulates glucose-dependent insulin secretion in pancreatic beta-cells by regulating mitochondrial calcium uptake. Involved in antigen processing and presentation. The polypeptide is Calcium uniporter protein, mitochondrial (Homo sapiens (Human)).